A 419-amino-acid polypeptide reads, in one-letter code: Tyrosine--tRNA ligase (419 aa).

Residue Tyr-34 coordinates L-tyrosine. Residues 39-48 (PTADSLHLGN) carry the 'HIGH' region motif. Tyr-169 and Gln-173 together coordinate L-tyrosine. The 'KMSKS' region motif lies at 229–233 (KFGKS). Lys-232 serves as a coordination point for ATP. In terms of domain architecture, S4 RNA-binding spans 353–419 (LTLIELLISA…GKKKNFVLTY (67 aa)).

This sequence belongs to the class-I aminoacyl-tRNA synthetase family. TyrS type 1 subfamily. As to quaternary structure, homodimer.

Its subcellular location is the cytoplasm. The enzyme catalyses tRNA(Tyr) + L-tyrosine + ATP = L-tyrosyl-tRNA(Tyr) + AMP + diphosphate + H(+). Its function is as follows. Catalyzes the attachment of tyrosine to tRNA(Tyr) in a two-step reaction: tyrosine is first activated by ATP to form Tyr-AMP and then transferred to the acceptor end of tRNA(Tyr). The protein is Tyrosine--tRNA ligase of Lactococcus lactis subsp. cremoris (strain SK11).